Here is a 304-residue protein sequence, read N- to C-terminus: Acetyl-coenzyme A carboxylase carboxyl transferase subunit beta (304 aa).

In terms of domain architecture, CoA carboxyltransferase N-terminal spans 23–292; sequence VWTKCDSCGQ…PNPDAPREGE (270 aa). C27, C30, C46, and C49 together coordinate Zn(2+). A C4-type zinc finger spans residues 27–49; the sequence is CDSCGQVLYRAELERNLEVCPKC. The disordered stretch occupies residues 281–304; that stretch reads PAPNPDAPREGEVVPPVPDQEPEA. Residues 295–304 show a composition bias toward pro residues; sequence PPVPDQEPEA.

The protein belongs to the AccD/PCCB family. Acetyl-CoA carboxylase is a heterohexamer composed of biotin carboxyl carrier protein (AccB), biotin carboxylase (AccC) and two subunits each of ACCase subunit alpha (AccA) and ACCase subunit beta (AccD). Requires Zn(2+) as cofactor.

Its subcellular location is the cytoplasm. It carries out the reaction N(6)-carboxybiotinyl-L-lysyl-[protein] + acetyl-CoA = N(6)-biotinyl-L-lysyl-[protein] + malonyl-CoA. The protein operates within lipid metabolism; malonyl-CoA biosynthesis; malonyl-CoA from acetyl-CoA: step 1/1. Component of the acetyl coenzyme A carboxylase (ACC) complex. Biotin carboxylase (BC) catalyzes the carboxylation of biotin on its carrier protein (BCCP) and then the CO(2) group is transferred by the transcarboxylase to acetyl-CoA to form malonyl-CoA. The polypeptide is Acetyl-coenzyme A carboxylase carboxyl transferase subunit beta (Citrobacter koseri (strain ATCC BAA-895 / CDC 4225-83 / SGSC4696)).